A 404-amino-acid polypeptide reads, in one-letter code: CCA-adding enzyme (404 aa).

ATP contacts are provided by Gly-27 and Arg-30. CTP is bound by residues Gly-27 and Arg-30. Asp-40 and Asp-42 together coordinate Mg(2+). Residues Arg-111, Asp-154, Arg-157, Arg-160, and Arg-163 each contribute to the ATP site. Residues Arg-111, Asp-154, Arg-157, Arg-160, and Arg-163 each coordinate CTP.

The protein belongs to the tRNA nucleotidyltransferase/poly(A) polymerase family. Bacterial CCA-adding enzyme type 3 subfamily. As to quaternary structure, homodimer. Mg(2+) is required as a cofactor.

The enzyme catalyses a tRNA precursor + 2 CTP + ATP = a tRNA with a 3' CCA end + 3 diphosphate. It carries out the reaction a tRNA with a 3' CCA end + 2 CTP + ATP = a tRNA with a 3' CCACCA end + 3 diphosphate. Functionally, catalyzes the addition and repair of the essential 3'-terminal CCA sequence in tRNAs without using a nucleic acid template. Adds these three nucleotides in the order of C, C, and A to the tRNA nucleotide-73, using CTP and ATP as substrates and producing inorganic pyrophosphate. tRNA 3'-terminal CCA addition is required both for tRNA processing and repair. Also involved in tRNA surveillance by mediating tandem CCA addition to generate a CCACCA at the 3' terminus of unstable tRNAs. While stable tRNAs receive only 3'-terminal CCA, unstable tRNAs are marked with CCACCA and rapidly degraded. The chain is CCA-adding enzyme from Geobacillus thermodenitrificans (strain NG80-2).